We begin with the raw amino-acid sequence, 674 residues long: Probable potassium transport system protein Kup (674 aa).

12 consecutive transmembrane segments (helical) span residues 7–27 (IFWGALITLGIVYGDIGTSPL), 52–72 (LSLVFWTLMLMTTIKYVLIAL), 95–115 (WLILPALLGGAALLADGTLTP), 145–165 (LVTFVILLVLFLIQRFGTSFI), 169–189 (FGPLMLLWFSFLAIFGIVNLI), 204–224 (LMLLFSPANKVGIFILGSVFL), 244–264 (IYLTWPFVCGALVLNYFGQGA), 291–311 (VYLFGVLISTIAAIIASQALI), 342–362 (IYIRTINWSLCICTLLVLVYF), 368–388 (MEAAYGLAITITMLMTTILLS), 397–417 (VVFNGIFLAVFLSVELIFLIS), and 425–445 (GGYVTLLITLLILLIMVIWYF).

The protein belongs to the HAK/KUP transporter (TC 2.A.72) family.

The protein localises to the cell membrane. It carries out the reaction K(+)(in) + H(+)(in) = K(+)(out) + H(+)(out). Functionally, transport of potassium into the cell. Likely operates as a K(+):H(+) symporter. In Ligilactobacillus salivarius (strain UCC118) (Lactobacillus salivarius), this protein is Probable potassium transport system protein Kup.